A 66-amino-acid polypeptide reads, in one-letter code: Large ribosomal subunit protein bL35 (66 aa).

Belongs to the bacterial ribosomal protein bL35 family.

This is Large ribosomal subunit protein bL35 from Deinococcus deserti (strain DSM 17065 / CIP 109153 / LMG 22923 / VCD115).